Consider the following 419-residue polypeptide: Ribosome biogenesis protein WDR12 homolog (419 aa).

Positions 10 to 91 are ubiquitin-like (UBL) domain; the sequence is VQVHLKTKQE…EDAIDIEYVE (82 aa). WD repeat units follow at residues 103–140, 142–184, 191–230, 249–287, 289–328, 334–374, and 378–416; these read LHDD…KLTI, GHTA…NAVE, GHER…TSEG, GHRE…IKTE, STNK…GSVV, GHNA…APLY, and GHGE…IENM.

It belongs to the WD repeat WDR12/YTM1 family.

The protein localises to the nucleus. It localises to the nucleolus. It is found in the nucleoplasm. Required for maturation of ribosomal RNAs and formation of the large ribosomal subunit. The chain is Ribosome biogenesis protein WDR12 homolog from Drosophila virilis (Fruit fly).